A 117-amino-acid polypeptide reads, in one-letter code: NLYQFKNMIQCANKGSRSWLDYVNYGCYCGWGGSGTPVDELDRCCQTHDNCYDQAGKKGCFPKLTLYSWKCTGNVPTCNSKSGCKDFVCACDAEAAKCFAKAPYKKENFKIDTKTRC.

Intrachain disulfides connect C11-C71, C27-C117, C29-C45, C44-C98, C51-C91, C60-C84, and C78-C89. The Ca(2+) site is built by Y28, G30, and G32. The active site involves H48. A Ca(2+)-binding site is contributed by D49. D92 is a catalytic residue.

The protein belongs to the phospholipase A2 family. Group I subfamily. D49 sub-subfamily. Ca(2+) serves as cofactor. Expressed by the venom gland.

It localises to the secreted. The catalysed reaction is a 1,2-diacyl-sn-glycero-3-phosphocholine + H2O = a 1-acyl-sn-glycero-3-phosphocholine + a fatty acid + H(+). PLA2 catalyzes the calcium-dependent hydrolysis of the 2-acyl groups in 3-sn-phosphoglycerides. This chain is Basic phospholipase A2 pseudexin A chain, found in Pseudechis porphyriacus (Red-bellied black snake).